We begin with the raw amino-acid sequence, 314 residues long: Deacetoxycephalosporin C synthase (314 aa).

The region spanning 156–269 is the Fe2OG dioxygenase domain; it reads DCEPLLRLRY…RTSSVFFLRP (114 aa).

Belongs to the iron/ascorbate-dependent oxidoreductase family. Fe cation serves as cofactor. The cofactor is L-ascorbate.

The enzyme catalyses penicillin N + 2-oxoglutarate + O2 = deacetoxycephalosporin C + succinate + CO2 + H2O. Its pathway is antibiotic biosynthesis; cephalosporin C biosynthesis. In terms of biological role, catalyzes the step from penicillin N to deacetoxy-cephalosporin C. The sequence is that of Deacetoxycephalosporin C synthase (cefE) from Amycolatopsis lactamdurans (Nocardia lactamdurans).